The following is a 351-amino-acid chain: Holliday junction branch migration complex subunit RuvB (351 aa).

The large ATPase domain (RuvB-L) stretch occupies residues 1–189 (MTAHDADWSD…FGFTAHMDFY (189 aa)). Residues leucine 28, arginine 29, glycine 70, lysine 73, threonine 74, serine 75, 136–138 (EDF), arginine 179, tyrosine 189, and arginine 226 contribute to the ATP site. Threonine 74 lines the Mg(2+) pocket. The segment at 190–260 (EPAELQQVLA…VAKAALAVYD (71 aa)) is small ATPAse domain (RuvB-S). Residues 263–351 (ELGLDRLDRA…AGLGQPGLFD (89 aa)) form a head domain (RuvB-H) region. Positions 318 and 323 each coordinate DNA.

This sequence belongs to the RuvB family. Homohexamer. Forms an RuvA(8)-RuvB(12)-Holliday junction (HJ) complex. HJ DNA is sandwiched between 2 RuvA tetramers; dsDNA enters through RuvA and exits via RuvB. An RuvB hexamer assembles on each DNA strand where it exits the tetramer. Each RuvB hexamer is contacted by two RuvA subunits (via domain III) on 2 adjacent RuvB subunits; this complex drives branch migration. In the full resolvosome a probable DNA-RuvA(4)-RuvB(12)-RuvC(2) complex forms which resolves the HJ.

Its subcellular location is the cytoplasm. It carries out the reaction ATP + H2O = ADP + phosphate + H(+). In terms of biological role, the RuvA-RuvB-RuvC complex processes Holliday junction (HJ) DNA during genetic recombination and DNA repair, while the RuvA-RuvB complex plays an important role in the rescue of blocked DNA replication forks via replication fork reversal (RFR). RuvA specifically binds to HJ cruciform DNA, conferring on it an open structure. The RuvB hexamer acts as an ATP-dependent pump, pulling dsDNA into and through the RuvAB complex. RuvB forms 2 homohexamers on either side of HJ DNA bound by 1 or 2 RuvA tetramers; 4 subunits per hexamer contact DNA at a time. Coordinated motions by a converter formed by DNA-disengaged RuvB subunits stimulates ATP hydrolysis and nucleotide exchange. Immobilization of the converter enables RuvB to convert the ATP-contained energy into a lever motion, pulling 2 nucleotides of DNA out of the RuvA tetramer per ATP hydrolyzed, thus driving DNA branch migration. The RuvB motors rotate together with the DNA substrate, which together with the progressing nucleotide cycle form the mechanistic basis for DNA recombination by continuous HJ branch migration. Branch migration allows RuvC to scan DNA until it finds its consensus sequence, where it cleaves and resolves cruciform DNA. This chain is Holliday junction branch migration complex subunit RuvB, found in Mycobacterium avium (strain 104).